A 191-amino-acid chain; its full sequence is Protein Ves (191 aa).

Belongs to the Ves family.

The polypeptide is Protein Ves (Escherichia coli O7:K1 (strain IAI39 / ExPEC)).